The chain runs to 261 residues: Imidazole glycerol phosphate synthase subunit HisF (261 aa).

Residues Asp16 and Asp135 contribute to the active site.

The protein belongs to the HisA/HisF family. Heterodimer of HisH and HisF.

It is found in the cytoplasm. The enzyme catalyses 5-[(5-phospho-1-deoxy-D-ribulos-1-ylimino)methylamino]-1-(5-phospho-beta-D-ribosyl)imidazole-4-carboxamide + L-glutamine = D-erythro-1-(imidazol-4-yl)glycerol 3-phosphate + 5-amino-1-(5-phospho-beta-D-ribosyl)imidazole-4-carboxamide + L-glutamate + H(+). It functions in the pathway amino-acid biosynthesis; L-histidine biosynthesis; L-histidine from 5-phospho-alpha-D-ribose 1-diphosphate: step 5/9. IGPS catalyzes the conversion of PRFAR and glutamine to IGP, AICAR and glutamate. The HisF subunit catalyzes the cyclization activity that produces IGP and AICAR from PRFAR using the ammonia provided by the HisH subunit. The protein is Imidazole glycerol phosphate synthase subunit HisF of Mycobacterium marinum (strain ATCC BAA-535 / M).